The sequence spans 8903 residues: MDAPDIQAPSGSCRTTLGKVAADIFEMNVETLDWDMSFIQMGGDSILAIDFIVRCRDEGIWVDMMDLLTVDTLAELADSIDEQNGVTADVANSSDLNEHETHQENGENINATLPVADRPLRFASMEIAHVKDASLVSSALESLITRHSALRSVWSVSSTGEYTLTTKPTAMAYESQPFFLAEASEPTKMNDAFELLKNALRSDGAPPLGCLFISNNATTASSIIVLAADANLVDSLSMRILRTEFREFILGHALDAPPGFQFSNWVAAKCQSTTARPRTLQQPQRAMERAIATKLSSSTSSADSSSNEATITTFQITHSTTKKLFAAQTHAALRTIPAEIINAALVYVLGAHYKKNVDHLMIKTAYSVREQQNLPLDAVGCYEAEIEWEAPALSSHESAVFAVRRVCDAFATPSRNSYDTSTETLYIDCTRLQDTEDDELSSFSDTILGHGHHVSVATVAGQVHVSMQLGNEKISRESITNEFKLCLEKMLDELAQSPEMATLRDYPLIHWSYSDLDDLVADLKSQIVTIKGIESIGPSSAVQESFFISQAINPDSYINHVKVRMASADDSVPHQLDTEKLVYAWGNIVKRHAVLRTAFVESRDRPGKYDQLVFNPIAVLPRVTVFSCTPEASNTPSFQTGKFEVPMRLCVYEISTSELQLELDISHALVDGHSAKILLHDLRASYLQDTYFSELAPLPYTDFAFHQQTVLDAGETSDGVAYWTSYMNKAGESHLPLITTNPNLKNLETAHRTISLPAGKLRAICGQLSITPANLFHIAWALALRRIILTDTITFSYIVSGRNGSLENSEATVGPFINTLPFSLALAPETSVTEVLDLSKRDWQEGASFHNVPISELAVSKTRSLKRLGNTLLSIEREGSSSHPFADGSDLSLSARTSATDFDLTANIRFDEERIEFSVEYWASRIAWPVAKAQMSAFEDAVSFLLDGVNMSIRDFPTHGIQDKMAFLEWNTAPARLESCVHDLVLEKMAAQPTALAISAWDGEMTYGQLDHASYRVACELVEFGITPDTMVGMCMEKSKLGVVAMLGILRAGGAVVPLGVQHPIARIKGIVADAQIPLILVDEAHKERLAELEPAAKLFAVDSFVKNDKSSPSTASSPKPCTSVGPDHVAWVIYTSGSTGAPKGVMLEHGALSTSILYHGRRLDIQSYDRLLQFAAFTFDAAIQEIITAFAFGASTCIPSEQERMDQLPAFISREKITITTLTSTVAALLHPQDVPTVRTMILMGEAVQAKVVDQWIDHATVINAYGPSECCIHSTCRPVQSSLTALNIGTAIAGATWIANPKNVGQLVPLGAPGELLLEGPLLARGYLNDPIKTAKAFVADPAFVAELNLSPGRRFYRTGDLAQQNPDGTITYLGRIDTQIKIRGQRVEIGEIEYHIGKQSGVHDAAVLYIREGPLADRLVAAVNLGESTPNADQFQGSAIQCVTGDEKDKATLQLREIQYALSQQVMHYMVPSVWIPLYAMPMNNSGKTDRRALTLWVQALSQSEIDEITAAEADDDIDESSMSTVEQELRQIWSKVLDVPLRSVTYSANFFSLGGDSITAMQVVSACRARGIIVTVRKVLDCQTIPQLALAAESQATSANEEVVTEAPFPLSPIQKMYFETVAADGLRADGETSFNQGVLLHVTRRVELAELTEALNKTVAKHAMLRARFFRTQNQEFQQKIERDVTGSYRLRAHADVANAESLHGIVAESQATLDLERGPIFAADLIERQDRQVLHLVAHHLVIDLVSWRILVQDLEEVIINKALPNPRSMAFPTWIERQHNYLDKLMDRKTEVLPVTVPATSWSYWGLVPGEEVYANRTSYQVKCDSNVVDLLSGHANAALKTEPVEVLLAALVFSFQQAFPDRDVPAIFTEGHGRETIDAVSDPSDTIGWFTTMAPVYLPQRASENAIIEVVKQVKDQRRRIPGRGMPYFGSRFSTTRCKSQFASHSPAEIIFNYAGRFQQLEREDALFRFDSEDDMNTTSKIGGRVKLLSALDVAATVEGNELLITVNFSNQSQHQDSIRSWVDAYGKCIESTVKELAAVSAPIATATDFPLAHLSDADMKTIETDSDYLAVIGCSSTAELDDILPCSPIQQGILLTQLQSPSTYCIHQTCRIRSTTTSPMDIERLIAAWKEIVSRHSILRTVLLEPLPGQEQFMQMVLKEPRIGIKRVNDISDDIAAEWLESQPTLDLSELTRPPHLLTLLTTAKGEVYCRFDISHALVDASSVSLIMQDLLSAYDGNLGPNVGSDYSSYVAYLEEQDSQDELEYWTSVLRNAEPCILSPQDPIHDNRADSTIKRVVAHIDDLSPLYKFRDTYGVSLASICQLSWALVLAMRTNSENISFGNLSSGRDVPIQNVQALVGPMINMLICRLSLDWDANASDVARNLQRQVSESFEHQRSSLASIQHALGLSRNQPLFNSTLSYKRADSDAAASPATGIYLEGLAWDDPTEYDLHTNIETSKTGMEIHMQYSTAVFSDNAATKMIEGLTRAIQAVCVGGETPLSQLQLLSVSEENKLRQWNAVATPRLERCVHELVLEKMSSHADATAISAWDGSMTYQELNNASIQLAHHLVAQGVRPEVKIGLCLDKSRLGVVAMLATLRAGGAVVPLGVQSPVARIETIVNDSEMKIVLVDRNNQERLNTLASTVQLLAVDQFAQTMSTPTDILLKEPCSSVQPDNTAWIIYTSGSTGIPKGVVLEHGSIATSMRAHGPAIGIQPQDRVSQFAAYTFDVSIAETMTTLAYGACICIPSEDDRINRLTGFLSEHKVTIATLTSTVASLVQSIDTPTIKTLVLTGEAVQPNVVDQWKQHNTTVINAYGPSESSIWATSKIVEDSKDALNIGLPLSGAFWVVNRNNIGQLVPVGSPGELLIEGPLLARGYLNDQIKTAASFVVDPAFIHDLGFTTGRRMYRTGDLVQQNDDGTMVYLGRQDSQVKIRGQRVEIGEIEYHVGKQEGVQDAAVLHMKDGPLADRLVAIVIPRNDDLKTTRGQNDAQITQIPQQFKEDTKRHLQGVKQKLSQLVMQYMVPNVWIPLVAMPVNMSGKMDRLALNRWIQSLSKDELAFMTGTEETQDPDQDKLFTTAIERQLRQVWSDVLGVSVHAVTYTSNFFSLGGDSITAMQVVSMSRSHGILVTVRTVLECQTIPELALQAKMVDGDNSQLTRVPEGPFALSPIQQMYFANISGDGIRADGNYRFNQAVSLYISTHISQEQLKHALDAVVSKHAMLRARYSQGPAGWQQWIEKDVSGGFRCQSYDAVDLDAMRQIIETSQTSLDIEHGPVFAADLIERQDNDRQVLHLVAHHLSIDLVSWRIVIQDLEQLLTNGKLPNPTTLSFPVWLERQQDSLDTFIAKMDTPESALSQLLPTSVPVIDWNYWGLSPGQEVYGSLTSLETRCDSATTSLLLDQANSALKTEPVEILLAALLSSFQQVFTDRQSPAVFTEGHGREAFDTKSELDLSETVGWFTTMTPVYIPQSAATNSIQMLQKIKDQRRRVPGRGMPYFGSRYLTSAGEEKFADHATPEILFNYFGRFQQFERDDALFQINNDDDSASSQFGDLIKLFAALDVTVAVEASELHIKTRFSRQSQHQASIQRWVQAYGNAIKSLVEELMVTAATSTATDFPLARLTDTNWEFMQKQYLVAMNLQSTAEIEDILPCSPMQQGILLTQLQSPTTYCIHQISRFQPSKSGSVSVERLISSWKHVVSRHSILRTILVEPLPGQERFVQIVLKQPHLDIIKLREITDSEHAAIATLEAQPLLNARKITSPPHRITMLQSTAGEVYCRFDISHALIDGSSMAILIRDLMSAYSEDVSSDSIASGSKYSSYVAYLEDTDHQKADLQYWTSLLADSEPCILPSEASAPESEPAQLGHVSKTISDLDALHGFRDTHNVSIASICQLAWALVLSTWTGSSDISFGNLSSGRDVPIEGVQDLVGPMINMLICHVPLDWNASVADVARKIQSQSAEAFEHQRSSLAAIQHELGLSRDKPLFNTTLSYKRITPPPSSSGSTSITFEALVQEDPTEHDLHVNIDSTPTGLQFDIQFSTAVFSSAAAETLTESLVRTVGILSQSAHLSLGNVNLMSTKDIQQLCEWNSKMPSRTELCVHDLISERLNTQPESMAISAWDGDMSYLELDAVSHTLASHLITLGLDFQRSEPMIGLCMDKSKWAVVAMLAILRAGGTVVPLGVQHPVSRIDNIVQDTSAIVVIVDRGQEQRLASLGTSTHLLAIESFFEASPPVASQSTPLTADTTPDSAAWVIYTSGSTGKPKGVVLEHGALVTNILAHGRAMNIQPGDRVLQFAAYTFDISIAEVLTTLIFGACVCVPSESERMEQLACFISRQEVTTAILTSTVAALVDPQQTPTLQTLVLTGEAVQPKVVSQWIGQATVMNCYGPSESWICTTHKIESAATASVVGPPIAGGFWVVNPGSVDQLVPIGAPGELLIEGPLLAREYLNNADKTAASFINDLAFTKELGLGSRRMYRTGDLVKYNSNGALVYIGRIDTQIKIRGQRVEIGEIENQIVDLLPGAREAVVDLITPAEVEGASPMLVAVVEYRQDEPRTDATGLSLYDPSQLTDATLEALDQLQTDIAKALPAYMIPATFLLASKLPINASGKLDRRTLRLALQDMTREELGNSTGNTSTKQAPRTTMEKKLRDLFAATLQLTPDNFGINDSFFRLGGDSVAAMKMTAAARALDLPLSVVDIFRFPILADLAEATELKCSQQQEDSRSLVPFSLWPELQQDHASSSDSYKTQLLAEAAQLCGVSASQIEDVYPCSPLQAGLMAITSQRPEAYIMRRAFKLRASFPIEQLKIAYERLTEAVSILRTRIIPSTCVDALQVVVQEKPFWHGEVGMSLEQYIAKDRSASMAYGRALSRTAIVSNEDGQFFVWTMHHSVYDGWSLTKMMGMLTQLMTGQALATTVPSSRFINYLVQQDTDQVAKFWQSHFQGANWTRFPALPSPRYQAKSSGQLRSQFQLPLNPSILETDSTVLRAAWALLVASKIGADEAVINVVLSGRMAPVEDIMNMLTPTVTTVPVRVSATKNQSINKFLKTIHDTAIDMVPFEHTGLQNIRTMVPTLGSDFDPGHTFVVQPAGESESAATMWNMDLEREATPLDAFDAYALTVECTVDSQRTGEVTVDIRYDSFVIPDDDAQKLLNQFTHIAQELAQQAATTKPLAQLQMLSEEDRFLLSKWNAHVPPRLEYTLHDAVTETMTSQPDAPAIYSWDGDMTYGEVNAASHRLASHLANQGVGPEVMVGLCMDKSKWAIVSMLAILRAGGAVVPLGISHPLARIDNIIQDTAAPLVLVDSTHQHRLQDLTAPTPLLAVDKFFEEYEAANYDSSAKLPSTVQPHHPAWVIYTSGSTGTPKGIVLEHRALATSILSHGKEFGIQAHDRVLQFAAYTFDVAIQDVIATLASGACLCVLSEYDRINRLTEFLSESNVSFAILTPTVAALIEPKDVPTVKTLVLGGEALPAKVVDQWAEHALIINGYGPSECCIHSTCAKIPLGSDARNIGRGVTANTWVVDPTDIGQLVPIGSPGELLIEGPLLARGYLNDPTKTAKSFIRDPAFLSTLNLPNGRRMYRTGDLVQQNRDGSLIYIGRRDTQVKIRGQRVEIGEIESRIVDLLPEAREAVVNLVRPAGEAADLVTLVAVIECDYAAGASHDTESELELFKPSSYSDALNRALVKLDDDLGQALPSYMVPSAYLLVPKLPLNPSGKLDRRAIQDQLQLLPRAKINSLSGLTNRKQAPTTAMEKRLQNLFCQTLMLTPEEVGVNDSFFRIGGDSIAAMKLTAVARHQNLPVSAADIFRWPRLGDLAQELEQRHELKTATLNDPAPLSLWPELSQAGTQSKSQLLANIASQCGVSVEAIEDVYPCSALQAGLMAITTQRPEAYVVQRVFKLQPSLSSQHFKAAWNQLAQSLPILRTRIVPSIHTDALQVVTRDAPVWQETQASVQDYLENDRTVPIAYGTPLSRVAIVQDQQSRYFVWTIHHSAYDGWSMGKMMEVLSQVLEGTTPSVLVPVSRFIGYLSQQDKSQTSTFWQKHFEGASCTVFPELPSRQHVVNPNKTLKSRIQISQSPGVTPFTALRAAWALVVASATGSDDALINVVLSGRLASVDGIMDLVAPTITTVPFHVPISQDLSVKEFLANVDERASDMIPYEHTGLQHIRRMVPGLGPEFSPGHVFVVQPAAESESTVAALPQMELIKSDFESEDAFHAQALTVECTVGQDLSDVEVQMRYDGNVLSTESATHLLDQFSHVVEQLALNGDKSLSQLELLTANDRQRLIEWNSTVPPRVERCIHQLVEEQMSLRPSELAIKAWDGDMTYAELDTSSRQLAQRLTQMGVGPDVMVGICMDKSKMGVVAILAILRAGGAVVPLGVTHPLTRIEGIVKDTKSPLILVDSAQKQRLASLTAQLLVVDSTLTNTLTASAQNISVQSKNVAWVVYTSGSTGTPKGVVLEHGALATSVLGHGAAYNVRSDDRILQFAAYTFDAAIQEIITTLAFGACICVPSEQDRVNRLTDFFIETGITMATLTSTVAGLVRPNMTPAVRTIILVGEAVQANVVDQWIQKATVINGYGPSECSIASTCGEIRHSSYALNIGTAIAGATWIVGSTNKLVPIGTPGELLLEGPLLARGYLNDAVKTAASFTTNAAFVEELGLSSANRRMYRTGDLVKQNIDGSITYLGRMDGQIKIRGQRVEIGEIEHHLQKHSVVGDAVVLYMKQGPLSGRLIAIVVTNDTNSTSQTAEIQHLPTGQRESANLELTDVQQSLSNQLMQYMIPSVWIALASIPVNISGKTDRLTLTRWLQSLSDDEVEALTGTEETEVDESSATNTERQLRQIWSQVLDVPIEKITFSSTFFSLGGDSITAMQVVSACRSCGLLVSVQKVLNCQTIPELAATLEVMDIVNDVDQIPEGFFELSPIQRMYFDDMAAMGLRADGENRFNQAVTLRITRPTTSEELIQATDILVAKHPMLRARFIQNQQSWQQHIEKEVAGSYRFELHEVADAQAMQSIITQSQASLNLEHGPVFAIDLIDLPTKKVLHLVAHHLVIDLVSWRVLAQNLEDLLTSGTEPNPTSLSFPSWIQKQFQFLPSSEETSESVLPVQIPASNWEYWGLVPGSERFGNRSKIEVKCDTSTTSLLTGDANYAFNTEPVEVLLAALAISFQKTFTDRSMPAVFVEGHGRETMDDKVDLSDTVGWFTTMTPVHVPMDKNESDLDVLRRTKDQRRRIPGRGLPYFASRFLGPNPDKFDNHGPAEILFNYFGRFQQLERENSVFQIEQDGESAPQLGNSVKLFAALDLSIAIEGDQLSITVHYSNKSKHQSTIRQWAESYGRTIKTLVEALVIAPPTSTATDFALARLSDSDMVAIEKDCVSNVGSTRNIEDILPCSPIQQGILLSQLQSPTTYSIYQTCRIKPSKHDSLVDAHRFLGAWKQLVAHHSILRTVLLEPLPGHEKFMQIVLREPEINVLTKSGVADAEAVEWINSRPGLDLTDRHHPPHRLTLLTTTSGQVYCRFDISHALVDASSLALIIRDLMSAYEGKLGSSSNGSNYSAYIAYLDDNNQQDDLNYWTSLLNNAEPCLVPPKEPTHTATQATIGHASQKVSDLDVLHKFRDTYGISIASICQLSWALVLATWTGSQNVSFGNLSSGRDAPIPGAQDLVGPMINMLVCHLQLDWDSKVSDAARKIQTQSSEAFEHQRVSLASIHHALGLSKDQPLFNSVMSYKRLATGESTPREIILEGLTAEDPSEYDVNVHINASSTSLDFNIQFSTTVLSQAAANKLTASLVQAVHAITQNANRSLGQLKLVLTNDEAQICKWNSFMPAGLQNRVHDHVLEQMARKPEAQAIFASDGQMSYGELDVSSRQLAHHLVSQGVGPDVVVGVCMDKSRWAVVAMLSILRAGGAVAPLGVQHPVARIDTIVKDASAPVILVDAEQEQRLDTLSNNFQLINVKSFFDTVQNTVSTSEPCTTVQSHHIAWVLYTSGSTGVPKGVMLEHGSLATSIMLHSRRFAMQSTERLLQFAAFTFDAAVFDIFAPLSHGGCTCIPSEHDRMNNLEAFAIGAKVTWGFFTPTVAALMQPSDIPSMRTLILGGEVVTAKGVDHWVKAGVKVINVYGPTECSIYSTYKHIQDTQNLRNIGTTVAAGLWVVNPVSGEQLVPIGAPGELLIEGPLLARGYLNDSAKTAASFVTDPKFVKELGLSPGRRMYRTGDLVQQNSDGTLTYLDRIGTQVKIHGQRLEIGEIESQLHDLLPESRYVCVCKKGTSLVAVIESTTPNRDTPGTSAHYIVAPGPEQEKTFEYLNSTLREKLPSYMIPSAFLVINEFPLNDNGKFDRRRIGNLLNSIPSDKWLEYTAKSQTYYAPISATEAVFCELWSQCIQQLDKPVSRTDNFFDLGGDSVTAMQLVQQLAKRGMRLATIDIFNNPVLHAMAACVSDVSDDNQEYKRFSLISTEEKSTALELVAADDTVDKQIRVIDVLPTTEFQTLMVRQIMSAARRQLNQFAFDADEACDVSVLTSAISDLVATIESLRAGFVKLPGQKYLQVVYAVWEPEIRVFYTEKSPRAFYEESSEQDLFPEPTLSRPLFDVAIIIDKITQKHRVVFRISHALYDGATLHRVWTALEALTTGQAPGYFAPIGAYLQSLQAQTTSETEDYWQQLVDGATISCVGTSSEPKVSRLGHVSGPPITLPESKQSHFNLAVAVKAAWALVFGHHANTHDIVFADVMTGRNTVDSSVADVVSCCARAVPCRITYEPDWTVEKLLDLTKQQQVNSMRHEGLELQQIAQRYMGWPQDDHEEAPDMRVSMTNYVKTSIRDLLLGATQYRRATAGFQNAYASADFSVDSVEESDGSLSVSIAYAADRISEQLAATLLHRTRVTLEKMMENPRSTVGHLLKQLD.

A Carrier 1 domain is found at 11 to 84 (GSCRTTLGKV…ELADSIDEQN (74 aa)). The interval 13-81 (CRTTLGKVAA…TLAELADSID (69 aa)) is thiolation (T) domain 1. Serine 45 bears the O-(pantetheine 4'-phosphoryl)serine mark. Adenylation (A) domain stretches follow at residues 59 to 736 (GIWV…SHLP) and 989 to 1386 (MAAQ…IKIR). The interval 572-953 (VPHQLDTEKL…FLLDGVNMSI (382 aa)) is condensation (C) domain 1. The region spanning 1524–1600 (SSMSTVEQEL…QLALAAESQA (77 aa)) is the Carrier 2 domain. Positions 1529–1597 (VEQELRQIWS…TIPQLALAAE (69 aa)) are thiolation (T) domain 2. Position 1561 is an O-(pantetheine 4'-phosphoryl)serine (serine 1561). Residues 1613–2050 (FPLSPIQKMY…TVKELAAVSA (438 aa)) are epimerase (E) domain 1. The interval 2091 to 2523 (DILPCSPIQQ…LLSVSEENKL (433 aa)) is condensation (C) domain 2. An adenylation (A) domain 2 region spans residues 2546–2943 (MSSHADATAI…GRQDSQVKIR (398 aa)). A Carrier 3 domain is found at 3084-3160 (LFTTAIERQL…ELALQAKMVD (77 aa)). The segment at 3089–3157 (IERQLRQVWS…TIPELALQAK (69 aa)) is thiolation (T) domain 3. Serine 3121 is subject to O-(pantetheine 4'-phosphoryl)serine. The tract at residues 3174–3614 (FALSPIQQMY…AIKSLVEELM (441 aa)) is epimerase (E) domain 2. Residues 3655–4093 (EDILPCSPMQ…LMSTKDIQQL (439 aa)) form a condensation (C) domain 3 region. An adenylation (A) domain 3 region spans residues 4114–4512 (ERLNTQPESM…GRIDTQIKIR (399 aa)). Residues 4649 to 4725 (APRTTMEKKL…DLAEATELKC (77 aa)) enclose the Carrier 4 domain. A thiolation (T) domain 4 region spans residues 4654–4722 (MEKKLRDLFA…ILADLAEATE (69 aa)). At serine 4686 the chain carries O-(pantetheine 4'-phosphoryl)serine. Residues 4775–5191 (EDVYPCSPLQ…AQLQMLSEED (417 aa)) are condensation (C) domain 4. The segment at 5216–5614 (ETMTSQPDAP…GRRDTQVKIR (399 aa)) is adenylation (A) domain 4. Residues 5753 to 5829 (APTTAMEKRL…DLAQELEQRH (77 aa)) enclose the Carrier 5 domain. The thiolation (T) domain 5 stretch occupies residues 5758–5826 (MEKRLQNLFC…RLGDLAQELE (69 aa)). Residue serine 5790 is modified to O-(pantetheine 4'-phosphoryl)serine. Residue glutamate 5875 is a region of interest, condensation (C) domain 5. An adenylation (A) domain 5 region spans residues 6311–6702 (EEQMSLRPSE…GRMDGQIKIR (392 aa)). A Carrier 6 domain is found at 6836–6912 (SSATNTERQL…ELAATLEVMD (77 aa)). The interval 6841–6909 (TERQLRQIWS…TIPELAATLE (69 aa)) is thiolation (T) domain 6. Serine 6873 is modified (O-(pantetheine 4'-phosphoryl)serine). The interval 6923–7349 (GFFELSPIQR…YGRTIKTLVE (427 aa)) is epimerase (E) domain 3. Residues 7391 to 7823 (EDILPCSPIQ…LVLTNDEAQI (433 aa)) are condensation (C) domain 6. The segment at 7844-8240 (EQMARKPEAQ…LDRIGTQVKI (397 aa)) is adenylation (A) domain 6. The 77-residue stretch at 8368 to 8444 (APISATEAVF…AMAACVSDVS (77 aa)) folds into the Carrier 7 domain. Positions 8369–8441 (PISATEAVFC…VLHAMAACVS (73 aa)) are thiolation (T) domain 7. O-(pantetheine 4'-phosphoryl)serine is present on serine 8405. The tract at residues 8482-8897 (DVLPTTEFQT…MENPRSTVGH (416 aa)) is condensation (C) domain 7.

This sequence belongs to the NRP synthetase family.

Its pathway is secondary metabolite biosynthesis. Functionally, nonribosomal peptide synthetase; part of the gene cluster that mediates the biosynthesis of verlamelin, a lipopeptide that exhibits antifungal activity against plant pathogenic fungi. Verlamelin is a cyclic hexadepsipeptide and is bridged by ester bonding between a 5-hydroxytetradecanoic acid moiety and a carboxyl group on the terminal Val of amide-bonded tetradecanoyl-hexapeptide D-allo-Thr-D-Ala-L-Pro-L-Gln-D-Tyr-L-Val. VlmA and vlmB are altogether regarded as essential components in the biosynthesis of 5-hydroxytetradecanoic acid. VlmA catalyzes the hydroxylation at position C5 of tetradecanoic acid produced in primary metabolism, while the precise function of vlmB still remains to be solved. To be loaded onto the waiting NRPS, 5-hydroxytetradecanoic acid is activated in the form of acyladenylate by the AMP-dependent ligase vlmC. VlmS seems to accept the fatty-acyl intermediate onto the initial module to further elongate amino acid residues by the downstream modules. In addition, in the last module at its C-terminus, vlmS contains a surplus condensation (C) domain that may be involved in cyclization, the last step to form verlamelin. In Lecanicillium sp, this protein is Nonribosomal peptide synthetase vlms.